The primary structure comprises 131 residues: Large ribosomal subunit protein bL17 (131 aa).

Belongs to the bacterial ribosomal protein bL17 family. In terms of assembly, part of the 50S ribosomal subunit. Contacts protein L32.

This Shewanella oneidensis (strain ATCC 700550 / JCM 31522 / CIP 106686 / LMG 19005 / NCIMB 14063 / MR-1) protein is Large ribosomal subunit protein bL17.